A 378-amino-acid chain; its full sequence is Quinolinate synthase (378 aa).

2 residues coordinate iminosuccinate: histidine 59 and serine 80. Cysteine 125 lines the [4Fe-4S] cluster pocket. Residues 151 to 153 (YAN) and serine 168 contribute to the iminosuccinate site. Cysteine 212 contributes to the [4Fe-4S] cluster binding site. Iminosuccinate contacts are provided by residues 238-240 (HPE) and threonine 255. [4Fe-4S] cluster is bound at residue cysteine 309.

The protein belongs to the quinolinate synthase family. Type 1 subfamily. Requires [4Fe-4S] cluster as cofactor.

The protein localises to the cytoplasm. The enzyme catalyses iminosuccinate + dihydroxyacetone phosphate = quinolinate + phosphate + 2 H2O + H(+). It functions in the pathway cofactor biosynthesis; NAD(+) biosynthesis; quinolinate from iminoaspartate: step 1/1. Its function is as follows. Catalyzes the condensation of iminoaspartate with dihydroxyacetone phosphate to form quinolinate. This chain is Quinolinate synthase, found in Burkholderia orbicola (strain MC0-3).